We begin with the raw amino-acid sequence, 485 residues long: UDP-N-acetylmuramate--L-alanine ligase (485 aa).

120–126 lines the ATP pocket; the sequence is GSHGKTT.

The protein belongs to the MurCDEF family.

The protein localises to the cytoplasm. It catalyses the reaction UDP-N-acetyl-alpha-D-muramate + L-alanine + ATP = UDP-N-acetyl-alpha-D-muramoyl-L-alanine + ADP + phosphate + H(+). It participates in cell wall biogenesis; peptidoglycan biosynthesis. In terms of biological role, cell wall formation. This is UDP-N-acetylmuramate--L-alanine ligase from Rickettsia conorii (strain ATCC VR-613 / Malish 7).